The chain runs to 1003 residues: NACHT, LRR and PYD domains-containing protein 9B (1003 aa).

One can recognise a Pyrin domain in the interval 1–91 (MAGSSGYGLL…SIMAQKKKRH (91 aa)). The NACHT domain occupies 143-465 (VTAIVAGTTG…QDKDICVPVI (323 aa)). Residue 149–156 (GTTGEGKT) participates in ATP binding. LRR repeat units follow at residues 749–770 (KVKH…SLCE), 778–799 (VLQS…HLYE), 806–826 (HLSL…NLLC), 835–856 (TLKE…EISA), 863–883 (NLKT…RQLC), 892–913 (NLEC…DLAL), and 920–940 (TLNS…VVLC).

As to quaternary structure, sensor component of NLRP9 inflammasomes. Inflammasomes are supramolecular complexes that assemble in the cytosol in response to pathogens, such as rotavirus, but not encephalomyocarditis virus (EMCV), and play critical roles in innate immunity and inflammation. The core of NLRP9 inflammasomes consists of a signal sensor component (NLRP9), an adapter (ASC/PYCARD), which recruits an effector pro-inflammatory caspase (CASP1). Within the complex, NLRP9 and PYCARD interact via their respective DAPIN/pyrin domains. This interaction initiates speck formation (nucleation) which greatly enhances further addition of soluble PYCARD molecules to the speck in a prion-like polymerization process. Clustered PYCARD nucleates the formation of CASP1 filaments through the interaction of their respective CARD domains, acting as a platform for CASP1 polymerization. CASP1 filament formation increases local enzyme concentration, resulting in trans-autocleavage and activation. Active CASP1 then processes IL1B and IL18 precursors, leading to the release of mature cytokines in the extracellular milieu and inflammatory response. Interacts with DHX9 upon rotavirus infection; this interaction may trigger inflammasome activation and inflammatory response. In terms of tissue distribution, predominantly expressed in the intestine, including proximal and distal colon, cecum, ileum, jejunum and duodenum (at protein level). In the ileum, expressed in epithelial cells. Also expressed in oocytes at all follicular stages and in preimplantation embryos (at protein level). Although expression decreases in preimplantation embryos, it is still detectable in blastocyts.

The protein resides in the cytoplasm. It is found in the inflammasome. In terms of biological role, as the sensor component of the NLRP9 inflammasome, plays a crucial role in innate immunity and inflammation. In response to pathogens, including rotavirus, initiates the formation of the inflammasome polymeric complex, made of NLRP9, PYCARD and CASP1. Recruitment of proCASP1 to the inflammasome promotes its activation and CASP1-catalyzed IL1B and IL18 maturation and release in the extracellular milieu. The active cytokines stimulate inflammatory responses. Inflammasomes can also induce pyroptosis, an inflammatory form of programmed cell death. NLRP9 inflammasome activation may be initiated by DHX9 interaction with viral double-stranded RNA (dsRNA), preferentially to short dsRNA segments. The protein is NACHT, LRR and PYD domains-containing protein 9B (Nlrp9b) of Mus musculus (Mouse).